We begin with the raw amino-acid sequence, 740 residues long: Copalyl diphosphate synthase 2 (740 aa).

Lysine 154 is a binding site for substrate. Positions 287 and 289 each coordinate Mg(2+). The short motif at 287 to 290 (DADD) is the DXDD motif element. A substrate-binding site is contributed by lysine 373.

It belongs to the terpene synthase family. Requires Mg(2+) as cofactor.

The catalysed reaction is (2E,6E,10E)-geranylgeranyl diphosphate = (+)-copalyl diphosphate. It functions in the pathway secondary metabolite biosynthesis; terpenoid biosynthesis. Its function is as follows. Monofunctional diterpene synthase converting geranylgeranyl diphosphate to copalyl diphosphate. The chain is Copalyl diphosphate synthase 2 (CPS2) from Selaginella moellendorffii (Spikemoss).